Consider the following 117-residue polypeptide: Iron-sulfur cluster insertion protein ErpA (117 aa).

Iron-sulfur cluster is bound by residues C45, C109, and C111.

It belongs to the HesB/IscA family. In terms of assembly, homodimer. The cofactor is iron-sulfur cluster.

Functionally, required for insertion of 4Fe-4S clusters for at least IspG. The protein is Iron-sulfur cluster insertion protein ErpA of Blochmanniella pennsylvanica (strain BPEN).